We begin with the raw amino-acid sequence, 1134 residues long: Vinculin (1134 aa).

An N-terminal globular head region spans residues 1–835; the sequence is MPVFHTRTIE…GAVAKVREAF (835 aa). S97 is subject to Phosphoserine. The segment at 168-208 is talin-interaction; that stretch reads MTKMAKMIDERQQELTHQEHRVMLVNSMNTVKELLPVLISA. K173 carries the N6-acetyllysine modification. 3 tandem repeats follow at residues 259 to 369, 370 to 479, and 480 to 589. The segment at 259–589 is 3 X 112 AA tandem repeats; the sequence is ASKDTEAMKR…LKDLKARMQE (331 aa). 7 positions are modified to phosphoserine: S260, S272, S275, S288, S290, S346, and S434. K496 carries the post-translational modification N6-acetyllysine. Position 537 is a phosphotyrosine (Y537). Phosphoserine is present on residues S574, S579, and S600. Residues T604 and T672 each carry the phosphothreonine modification. S721 is subject to Phosphoserine. The interaction with ACTN4 stretch occupies residues 741–764; the sequence is MANIQPQMLVAGATSIARRANRIL. Phosphoserine occurs at positions 795 and 809. Y822 is modified (phosphotyrosine). The interval 836–878 is linker (Pro-rich); sequence QPQEPDFPPPPPDLEQLRLTDELAPPKPPLPEGEVPPPRPPPP. The disordered stretch occupies residues 857–887; that stretch reads ELAPPKPPLPEGEVPPPRPPPPEEKDEEFPE. A compositionally biased stretch (pro residues) spans 860–876; sequence PPKPPLPEGEVPPPRPP. Residues 879–1134 are C-terminal tail; the sequence is EEKDEEFPEQ…RWVRKTPWYQ (256 aa). Facilitates phospholipid membrane insertion regions lie at residues 1003–1046 and 1120–1134; these read RLVR…KRIR and AGFT…PWYQ. A Phosphotyrosine; by SRC-type Tyr-kinases modification is found at Y1133.

It belongs to the vinculin/alpha-catenin family. In terms of assembly, exhibits self-association properties. Part of a complex composed of THSD1, PTK2/FAK1, TLN1 and VCL. Interacts with APBB1IP and NRAP. Interacts with TLN1. Interacts with CTNNB1 and this interaction is necessary for its localization to the cell-cell junctions and for its function in regulating cell surface expression of E-cadherin. Interacts with SYNM. Interacts with SORBS1. Interacts with CTNNA1. Binds to ACTN4; this interaction triggers conformational changes. Interacts with FLII. As to quaternary structure, (Microbial infection) Interacts via its globular head domain with the central portion of S.flexneri IcsA (also called VirG). Post-translationally, phosphorylated; on serines, threonines and tyrosines. Phosphorylation on Tyr-1133 in activated platelets affects head-tail interactions and cell spreading but has no effect on actin binding nor on localization to focal adhesion plaques. In terms of processing, acetylated; mainly by myristic acid but also by a small amount of palmitic acid. Metavinculin is muscle-specific.

It localises to the cell membrane. The protein resides in the cell junction. The protein localises to the adherens junction. It is found in the focal adhesion. Its subcellular location is the cytoplasm. It localises to the cytoskeleton. The protein resides in the sarcolemma. The protein localises to the cell projection. It is found in the podosome. Its function is as follows. Actin filament (F-actin)-binding protein involved in cell-matrix adhesion and cell-cell adhesion. Regulates cell-surface E-cadherin expression and potentiates mechanosensing by the E-cadherin complex. May also play important roles in cell morphology and locomotion. This chain is Vinculin (VCL), found in Homo sapiens (Human).